A 479-amino-acid polypeptide reads, in one-letter code: Deoxyribodipyrimidine photo-lyase (479 aa).

One can recognise a Photolyase/cryptochrome alpha/beta domain in the interval 6 to 137; sequence SLKAVWFRRD…PFYTFEDAYL (132 aa). An FAD-binding site is contributed by Tyr229. Arg233 is a DNA binding site. Residues 241–245 and 278–285 contribute to the FAD site; these read TSRLS and ELAWRDFY. 2 interaction with DNA regions span residues 278-285 and 344-345; these read ELAWRDFY and NR. 375-377 contacts FAD; the sequence is DYD. Gln407 is a binding site for DNA.

This sequence belongs to the DNA photolyase class-1 family. In terms of assembly, monomer. The cofactor is FAD. (6R)-5,10-methylene-5,6,7,8-tetrahydrofolate is required as a cofactor.

It carries out the reaction cyclobutadipyrimidine (in DNA) = 2 pyrimidine residues (in DNA).. Functionally, involved in repair of UV radiation-induced DNA damage. Catalyzes the light-dependent monomerization (300-600 nm) of cyclobutyl pyrimidine dimers (in cis-syn configuration), which are formed between adjacent bases on the same DNA strand upon exposure to ultraviolet radiation. This is Deoxyribodipyrimidine photo-lyase (phr) from Alkalihalophilus pseudofirmus (strain ATCC BAA-2126 / JCM 17055 / OF4) (Bacillus pseudofirmus).